The following is a 231-amino-acid chain: Orotidine 5'-phosphate decarboxylase (231 aa).

Substrate contacts are provided by residues D11, K33, 60 to 69, T117, R179, Q187, G207, and R208; that span reads DLKLHDIPNT. Catalysis depends on K62, which acts as the Proton donor.

The protein belongs to the OMP decarboxylase family. Type 1 subfamily. As to quaternary structure, homodimer.

It catalyses the reaction orotidine 5'-phosphate + H(+) = UMP + CO2. It functions in the pathway pyrimidine metabolism; UMP biosynthesis via de novo pathway; UMP from orotate: step 2/2. In terms of biological role, catalyzes the decarboxylation of orotidine 5'-monophosphate (OMP) to uridine 5'-monophosphate (UMP). In Ehrlichia chaffeensis (strain ATCC CRL-10679 / Arkansas), this protein is Orotidine 5'-phosphate decarboxylase.